Here is a 97-residue protein sequence, read N- to C-terminus: MSQISSDDVRKVAQLARLDLPEDKIATYTGQLESILEYVGQLQQVDTEGVPETTRAVEVTNVTRVDGVQPTAVREDILDQAPQREGDFFRVPKILAD.

The protein belongs to the GatC family. As to quaternary structure, heterotrimer of A, B and C subunits.

The catalysed reaction is L-glutamyl-tRNA(Gln) + L-glutamine + ATP + H2O = L-glutaminyl-tRNA(Gln) + L-glutamate + ADP + phosphate + H(+). It catalyses the reaction L-aspartyl-tRNA(Asn) + L-glutamine + ATP + H2O = L-asparaginyl-tRNA(Asn) + L-glutamate + ADP + phosphate + 2 H(+). Its function is as follows. Allows the formation of correctly charged Asn-tRNA(Asn) or Gln-tRNA(Gln) through the transamidation of misacylated Asp-tRNA(Asn) or Glu-tRNA(Gln) in organisms which lack either or both of asparaginyl-tRNA or glutaminyl-tRNA synthetases. The reaction takes place in the presence of glutamine and ATP through an activated phospho-Asp-tRNA(Asn) or phospho-Glu-tRNA(Gln). The polypeptide is Aspartyl/glutamyl-tRNA(Asn/Gln) amidotransferase subunit C (Synechococcus sp. (strain CC9605)).